The following is an 807-amino-acid chain: Ribosome biogenesis protein ERB1 (807 aa).

Residues 1-112 (MMAKNNKTTE…DTTSLTDRLS (112 aa)) form a disordered region. Composition is skewed to acidic residues over residues 21–30 (EESDVEEDED) and 42–56 (EASE…YESA). Ser-23 bears the Phosphoserine mark. Over residues 57–69 (VEEKESSSDKEAQ) the composition is skewed to basic and acidic residues. A phosphoserine mark is found at Ser-72 and Ser-76. The span at 86 to 102 (EEEGDEEEDYDSSEFSD) shows a compositional bias: acidic residues. Lys-127 is covalently cross-linked (Glycyl lysine isopeptide (Lys-Gly) (interchain with G-Cter in ubiquitin)). 2 positions are modified to phosphoserine: Ser-146 and Ser-149. The tract at residues 265–383 (RFVPSKNEAK…LRKVPGYGES (119 aa)) is required for interaction with NOP7. Residues 383–419 (SIRERFERSLDLYLAPRVRKNKLNIDPNSLIPELPSP) are required for interaction with YTM1. Phosphoserine is present on Ser-418. WD repeat units lie at residues 435–474 (GHKG…EVYR), 483–523 (NPDD…YDIE), 592–634 (SCKK…TQSP), 637–675 (KSKG…LVKK), 678–717 (PGAR…TPYK), 721–760 (YHEK…DMMK), and 776–807 (INSL…LWTT).

The protein belongs to the WD repeat BOP1/ERB1 family. Component of the NOP7 complex, composed of ERB1, NOP7 and YTM1. The complex is held together by ERB1, which interacts with NOP7 via its N-terminal domain and with YTM1 via a high-affinity interaction between the seven-bladed beta-propeller domains of the 2 proteins. The NOP7 complex associates with the 66S pre-ribosome.

It localises to the nucleus. Its subcellular location is the nucleolus. The protein resides in the nucleoplasm. In terms of biological role, component of the NOP7 complex, which is required for maturation of the 25S and 5.8S ribosomal RNAs and formation of the 60S ribosome. The polypeptide is Ribosome biogenesis protein ERB1 (Saccharomyces cerevisiae (strain YJM789) (Baker's yeast)).